Reading from the N-terminus, the 140-residue chain is Gas vesicle protein O (140 aa).

Residues 1 to 14 are compositionally biased toward basic and acidic residues; sequence MSDQGNEHANHDGI. The tract at residues 1–61 is disordered; the sequence is MSDQGNEHAN…DSTIGLSDAQ (61 aa). The segment covering 39–56 has biased composition (polar residues); it reads QTASDEAVSNQSPDSTIG.

It belongs to the gas vesicle GvpO family. In terms of assembly, forms homodimers, forms a GvpN-GvpO heterodimer, interacts with GvpC, GvpF, GvpI and GvpL, might interact with GvpA.

The protein localises to the gas vesicle. The protein resides in the cytoplasm. Its function is as follows. A minor component of the gas vesicle (GV), may play a role in transcription and/or RNA stability and/or in GV assembly. Gas vesicles are small, hollow, gas filled protein structures found in some microorganisms. They allow positioning of halobacteria at the optimal depth for growth in the poorly aerated shallow brine pools of their habitat. Expression of a 9.5 kb mc-vac DNA fragment containing 2 divergently transcribed regions (gvpD-gvpE-gvpF-gvpG-gvpH-gvpI-gvpJ-gvpK-gvpL-gvpM and gvpA-gvpC-gvpN-gvpO) allows H.volcanii to produce gas vesicles. The polypeptide is Gas vesicle protein O (Haloferax mediterranei (strain ATCC 33500 / DSM 1411 / JCM 8866 / NBRC 14739 / NCIMB 2177 / R-4) (Halobacterium mediterranei)).